Here is a 486-residue protein sequence, read N- to C-terminus: MRKERPGVLFNKIRSYFICPGCNCLPDWPVTLPCGGTVCRKCFRNAYSSESSGKVSPSRCCFYNHKKPHYSVETEVKDVIISKVVELIKTTEFQISQQSLVPLELKEEICHDDCLSSSPPCTSALTEITLLPPTFHNLIPSSSSYETAVAEFLHMEDLLQENVSRELECQICFGMLYDPVVSPCGHTFCGPCLMQALTQSPQCPTCRFGLPSPVVLEHAKSHSITTFLRDFYPDNWLERQKSWEEEKEQESWLPLFISMLAYPRMPTFLHIFELRYHIMIKKCLETSKRFCIAMPLRARSDGHNEHRELRNARGQRLFCSEYGTILEIIQVEPLIDGRSLVEARGSYCVRIIDFRADGLFPRVKIEKHYDTPLRATPLQFPEPEYLLMYGNLSNEELVERIDAFYMNARRTYVHWVVPLIDIKMEARQSIADLSYKITNLLPISELEKTRILQVDNPTDRLVLVLIWLTQLQESWWYRVGSACTIA.

The segment at 169–207 (CQICFGMLYDPVVSPCGHTFCGPCLMQALTQSPQCPTCR) adopts an RING-type zinc-finger fold. One can recognise a Lon N-terminal domain in the interval 250-472 (ESWLPLFISM…LVLIWLTQLQ (223 aa)).

The chain is LON peptidase N-terminal domain and RING finger protein C14F5.10c from Schizosaccharomyces pombe (strain 972 / ATCC 24843) (Fission yeast).